The chain runs to 690 residues: MNQNFYSMIDRYKHQQLRIGPVSPQQISAWANKILPNGEVVGEVTKPYTFHYKTNKPEKDGLFCERIFGPIKSGICACGNYRVIGAEKEDPKFCEQCGVEFVDSRVRRYQMGYIKLACPVTHVWYLKRLPSYIANLLDKPLKELEGLVYCDFSFARPIAKKPTFLRLRGSFEYEIQSWKYSIPLFFTTQGFETFRNREISTGAGAIREQLADLDLRIITDNSLIEWKELGDEGSTGNEWEDRKIRRRKDFLVRRMELAKHFIRTNVEPEWMVLCLLPVLPPELRPIIQIDGGKLMSSDINELYRRVIYRNNTLTDLLTTSRSTPGELVMCQEKLVQEAVDTLLDNGIRGQPMRDGHNKVYKSFSDVIEGKEGRFRETLLGKRVDYSGRSVIVVGPSLSLHQCGLPREIAIELFQTFVIRGLIRQHVASNIGIAKSKIREKEPIVWEILQEVMQGHPVLLNRAPTLHRLGIQAFQPILVEGRAICLHPLVCKGFNADFDGDQMAVHVPLSLEAQAEARLLMFSHMNLLSPAIGDPISVPTQDMLIGLYVLTIGNPRGICANRYNFFNCKNDENAPLDNDNYQATKEKEPHFSSSYDALGAYRRKRIRLDSPLWLRWRLDQRVIIGSREVPLEVQYESFGTYHEIYRHYLIVRSVKKEICSIYIRTTVGHISFYREIEEAIQGFYRAYSYAS.

Cys76, Cys78, Cys94, and Cys97 together coordinate Zn(2+). The Mg(2+) site is built by Asp496, Asp498, and Asp500.

It belongs to the RNA polymerase beta' chain family. RpoC1 subfamily. In plastids the minimal PEP RNA polymerase catalytic core is composed of four subunits: alpha, beta, beta', and beta''. When a (nuclear-encoded) sigma factor is associated with the core the holoenzyme is formed, which can initiate transcription. The cofactor is Mg(2+). Requires Zn(2+) as cofactor.

Its subcellular location is the plastid. The protein resides in the chloroplast. It carries out the reaction RNA(n) + a ribonucleoside 5'-triphosphate = RNA(n+1) + diphosphate. Its function is as follows. DNA-dependent RNA polymerase catalyzes the transcription of DNA into RNA using the four ribonucleoside triphosphates as substrates. The polypeptide is DNA-directed RNA polymerase subunit beta' (Lemna minor (Common duckweed)).